The sequence spans 324 residues: tRNA dimethylallyltransferase (324 aa).

Residue 17–24 (GPTASGKT) participates in ATP binding. 19–24 (TASGKT) is a substrate binding site. 3 interaction with substrate tRNA regions span residues 42-45 (DSAL), 166-170 (QRIQR), and 251-256 (RCVGYR).

Belongs to the IPP transferase family. In terms of assembly, monomer. The cofactor is Mg(2+).

It carries out the reaction adenosine(37) in tRNA + dimethylallyl diphosphate = N(6)-dimethylallyladenosine(37) in tRNA + diphosphate. Functionally, catalyzes the transfer of a dimethylallyl group onto the adenine at position 37 in tRNAs that read codons beginning with uridine, leading to the formation of N6-(dimethylallyl)adenosine (i(6)A). The sequence is that of tRNA dimethylallyltransferase from Burkholderia thailandensis (strain ATCC 700388 / DSM 13276 / CCUG 48851 / CIP 106301 / E264).